We begin with the raw amino-acid sequence, 122 residues long: Large ribosomal subunit protein uL14 (122 aa).

It belongs to the universal ribosomal protein uL14 family. In terms of assembly, part of the 50S ribosomal subunit. Forms a cluster with proteins L3 and L19. In the 70S ribosome, L14 and L19 interact and together make contacts with the 16S rRNA in bridges B5 and B8.

Its function is as follows. Binds to 23S rRNA. Forms part of two intersubunit bridges in the 70S ribosome. This is Large ribosomal subunit protein uL14 from Corynebacterium efficiens (strain DSM 44549 / YS-314 / AJ 12310 / JCM 11189 / NBRC 100395).